We begin with the raw amino-acid sequence, 169 residues long: Peptide methionine sulfoxide reductase MsrA (169 aa).

The active site involves C10.

The protein belongs to the MsrA Met sulfoxide reductase family.

It catalyses the reaction L-methionyl-[protein] + [thioredoxin]-disulfide + H2O = L-methionyl-(S)-S-oxide-[protein] + [thioredoxin]-dithiol. The catalysed reaction is [thioredoxin]-disulfide + L-methionine + H2O = L-methionine (S)-S-oxide + [thioredoxin]-dithiol. Functionally, has an important function as a repair enzyme for proteins that have been inactivated by oxidation. Catalyzes the reversible oxidation-reduction of methionine sulfoxide in proteins to methionine. The polypeptide is Peptide methionine sulfoxide reductase MsrA (Streptococcus uberis (strain ATCC BAA-854 / 0140J)).